Here is a 901-residue protein sequence, read N- to C-terminus: Protein translocase subunit SecA (901 aa).

ATP contacts are provided by residues Gln-87, 105-109 (GEGKT), and Asp-512. Zn(2+) contacts are provided by Cys-885, Cys-887, Cys-896, and His-897.

This sequence belongs to the SecA family. As to quaternary structure, monomer and homodimer. Part of the essential Sec protein translocation apparatus which comprises SecA, SecYEG and auxiliary proteins SecDF-YajC and YidC. Zn(2+) serves as cofactor.

The protein localises to the cell inner membrane. The protein resides in the cytoplasm. It catalyses the reaction ATP + H2O + cellular proteinSide 1 = ADP + phosphate + cellular proteinSide 2.. In terms of biological role, part of the Sec protein translocase complex. Interacts with the SecYEG preprotein conducting channel. Has a central role in coupling the hydrolysis of ATP to the transfer of proteins into and across the cell membrane, serving both as a receptor for the preprotein-SecB complex and as an ATP-driven molecular motor driving the stepwise translocation of polypeptide chains across the membrane. This chain is Protein translocase subunit SecA, found in Salmonella paratyphi A (strain ATCC 9150 / SARB42).